We begin with the raw amino-acid sequence, 57 residues long: Potassium channel toxin alpha-KTx 8.8 (57 aa).

An N-terminal signal peptide occupies residues 1–19 (MCRLYAIILIVLVMNVIMT). Residues 20–28 (IIPDSKVEV) constitute a propeptide that is removed on maturation. 3 disulfides stabilise this stretch: C31–C47, C34–C52, and C38–C54.

Belongs to the short scorpion toxin superfamily. Potassium channel inhibitor family. Alpha-KTx 08 subfamily. Post-translationally, contains 3 disulfide bonds. As to expression, expressed by the venom gland.

Its subcellular location is the secreted. Its function is as follows. Selectively inhibits voltage-gated potassium channels rKv1.2/KCNA2 (IC(50)=331 nM) and hKv1.3/KCNA3 (IC(50)=503 nM). Partially inihibts rKv1.6/KCNA6 (IC(50)=9983 nM). The chain is Potassium channel toxin alpha-KTx 8.8 from Orthochirus scrobiculosus (Central Asian scorpion).